The primary structure comprises 440 residues: MKRLARSLYLQVLLAVVLGALVGHLFPATGASLKPLGDGFIKLVKMLIAPIVFATVVTGIAKMGDLRKVGRVGLKGLLYFEVLTTVALAIGLVVARLARPGAGMNVDPATLDTKAIASYTNGAQAHGTVDFLMNVIPRDVADAFARGDILQVLLFSVLFGAALAALKDKGRPVLEFVDGLSLVLFRIVGFVMRLAPVGAFGAMAFTVGKYGIATLLSLGKLIACFYATSALFVVLMLGLVLRWCGLSLFRFLRYIKEEIFVVLGTSSSESALPLMMRKMEKLGCSKPVVGLVVPMGYSFNLDGTSIYLTLATLFIAQATNTHVTLVQELEILAVLLLTSKGAAAVTGGGFITLAATLSAVGNIPVAGLALLLGVDRFMSEARAITNLIGNGVASVAVSRWEGELDQARARAVLAGTVPEEVEPANEPEPPAIPAGAGLHG.

8 consecutive transmembrane segments (helical) span residues 8-28 (LYLQVLLAVVLGALVGHLFPA), 40-60 (FIKLVKMLIAPIVFATVVTGI), 74-94 (LKGLLYFEVLTTVALAIGLVV), 147-167 (GDILQVLLFSVLFGAALAALK), 187-207 (IVGFVMRLAPVGAFGAMAFTV), 221-241 (LIACFYATSALFVVLMLGLVL), 288-308 (VVGLVVPMGYSFNLDGTSIYL), and 354-374 (AATLSAVGNIPVAGLALLLGV). The disordered stretch occupies residues 419–440 (EEVEPANEPEPPAIPAGAGLHG).

Belongs to the dicarboxylate/amino acid:cation symporter (DAACS) (TC 2.A.23) family.

The protein resides in the cell inner membrane. Functionally, responsible for the transport of dicarboxylates such as succinate, fumarate, and malate from the periplasm across the membrane. This Anaeromyxobacter sp. (strain K) protein is C4-dicarboxylate transport protein.